The primary structure comprises 631 residues: Phosphomethylpyrimidine synthase (631 aa).

Residues Asn239, Met268, Tyr297, His333, 353 to 355 (SRG), 394 to 397 (DGLR), and Glu433 each bind substrate. Residue His437 participates in Zn(2+) binding. Substrate is bound at residue Tyr460. His501 provides a ligand contact to Zn(2+). Residues Cys581, Cys584, and Cys589 each coordinate [4Fe-4S] cluster.

It belongs to the ThiC family. In terms of assembly, homodimer. The cofactor is [4Fe-4S] cluster.

The enzyme catalyses 5-amino-1-(5-phospho-beta-D-ribosyl)imidazole + S-adenosyl-L-methionine = 4-amino-2-methyl-5-(phosphooxymethyl)pyrimidine + CO + 5'-deoxyadenosine + formate + L-methionine + 3 H(+). It functions in the pathway cofactor biosynthesis; thiamine diphosphate biosynthesis. In terms of biological role, catalyzes the synthesis of the hydroxymethylpyrimidine phosphate (HMP-P) moiety of thiamine from aminoimidazole ribotide (AIR) in a radical S-adenosyl-L-methionine (SAM)-dependent reaction. The sequence is that of Phosphomethylpyrimidine synthase from Escherichia coli O45:K1 (strain S88 / ExPEC).